The following is a 700-amino-acid chain: Inhibitor of carbonic anhydrase (700 aa).

An N-terminal signal peptide occupies residues methionine 1–alanine 19. 2 Transferrin-like domains span residues isoleucine 25–arginine 347 and valine 355–glutamine 685. Cystine bridges form between cysteine 28/cysteine 67, cysteine 38/cysteine 58, cysteine 137/cysteine 213, cysteine 172/cysteine 188, cysteine 175/cysteine 198, cysteine 185/cysteine 196, cysteine 246/cysteine 260, cysteine 358/cysteine 390, cysteine 368/cysteine 381, cysteine 415/cysteine 695, cysteine 438/cysteine 658, cysteine 470/cysteine 545, cysteine 494/cysteine 686, cysteine 504/cysteine 518, cysteine 515/cysteine 528, and cysteine 585/cysteine 599. An N-linked (GlcNAc...) asparagine glycan is attached at asparagine 664.

Belongs to the transferrin family. Monomer. Interacts (via transferrin-like domain 2) with CA2. N-glycosylated. Detected in blood plasma, heart, kidney, liver, colon, lung, spleen, pancreas and testis (at protein level).

It is found in the secreted. Functionally, inhibitor for carbonic anhydrase 2 (CA2). Does not bind iron ions. This Mus musculus (Mouse) protein is Inhibitor of carbonic anhydrase.